A 151-amino-acid polypeptide reads, in one-letter code: Large ribosomal subunit protein uL13 (151 aa).

The protein belongs to the universal ribosomal protein uL13 family. As to quaternary structure, part of the 50S ribosomal subunit.

Functionally, this protein is one of the early assembly proteins of the 50S ribosomal subunit, although it is not seen to bind rRNA by itself. It is important during the early stages of 50S assembly. This is Large ribosomal subunit protein uL13 from Mycoplasma mycoides subsp. mycoides SC (strain CCUG 32753 / NCTC 10114 / PG1).